The chain runs to 306 residues: Cathepsin Z (306 aa).

The N-terminal stretch at 1-20 (MLAILFNFFLLTYFTNITLG) is a signal peptide. Positions 21–65 (KVGKSIDLDTRNGYNVHGCYKQTGKIYAHKTYPRQYEAENYNFDD) are cleaved as a propeptide — activation peptide. Cystine bridges form between Cys-39/Cys-96, Cys-93/Cys-136, Cys-130/Cys-168, Cys-158/Cys-174, and Cys-177/Cys-182. The active site involves Cys-96. Residue Asn-187 is glycosylated (N-linked (GlcNAc...) asparagine). The cysteines at positions 217 and 299 are disulfide-linked. Active-site residues include His-243 and Asn-265. N-linked (GlcNAc...) asparagine glycosylation occurs at Asn-286.

This sequence belongs to the peptidase C1 family.

The protein localises to the cytoplasmic vesicle. It is found in the secretory vesicle. It localises to the secreted. It catalyses the reaction Release of C-terminal amino acid residues with broad specificity, but lacks action on C-terminal proline. Shows weak endopeptidase activity.. With respect to regulation, the disulfide bridge formed between Cys-39 in the propeptide and the active site residue Cys-96 may prevent activation of the zymogen through formation of a reversible covalent bond with the active site residue. Its function is as follows. Exhibits carboxy-monopeptidase as well as carboxy-dipeptidase activity. Plays an essential role in molting, a process during larval stages in which a new cuticle is formed and the old cuticle is shed. Required for the degradation and shedding of the old cuticle. In Onchocerca volvulus, this protein is Cathepsin Z.